The following is an 81-amino-acid chain: Defensin-like protein b (81 aa).

Positions 1–26 (MRNATFFIVFYVFISLVLSNVQDVTA) are cleaved as a signal peptide. Intrachain disulfides connect C31-C81, C42-C66, C50-C76, and C64-C78.

It belongs to the DEFL family. In terms of tissue distribution, expressed in microspores and in young and mature anthers.

It is found in the secreted. In terms of biological role, involved in self-incompatibility. In Arabidopsis lyrata (Lyre-leaved rock-cress), this protein is Defensin-like protein b (SCRb-1).